A 935-amino-acid polypeptide reads, in one-letter code: Kinesin heavy chain (935 aa).

Residues 5–329 form the Kinesin motor domain; sequence NIKVVCRFRP…LRFGARAKSI (325 aa). Residues 87 to 94 and 237 to 244 each bind ATP; these read GQTGSGKT and GSEKVGKT. Positions 342-887 form a coiled coil; it reads AELKALLKKV…SQKSQNSLAA (546 aa). 2 disordered regions span residues 400–419 and 898–935; these read APGFKSPVSDEGSRPATPVP and RGNGAAIDNGSDDGSLPTSPTDKRDKRSSWMPGFMNSR.

The protein belongs to the TRAFAC class myosin-kinesin ATPase superfamily. Kinesin family. Kinesin subfamily.

It localises to the cytoplasm. The protein localises to the cytoskeleton. In terms of biological role, kinesin is a microtubule-associated force-producing protein that may play a role in organelle transport. Its motor activity is directed toward the microtubule's plus end. The speed of this motor is 4-5 times faster than its animal counterparts. The chain is Kinesin heavy chain from Syncephalastrum racemosum (Filamentous fungus).